Consider the following 320-residue polypeptide: Beta-sarcoglycan (320 aa).

The span at 1–10 shows a compositional bias: low complexity; the sequence is MAAAAAAAAA. Residues 1–34 form a disordered region; sequence MAAAAAAAAATEQQGSNGPVKKSMREKAVERRNV. Over 1–67 the chain is Cytoplasmic; sequence MAAAAAAAAA…GLRGRKGNLA (67 aa). Over residues 23-34 the composition is skewed to basic and acidic residues; sequence SMREKAVERRNV. A helical; Signal-anchor for type II membrane protein membrane pass occupies residues 68 to 88; it reads ICVIVLLFILAVINLLITLVI. At 89–320 the chain is on the extracellular side; the sequence is WAVIRIGPNG…VSDNPCGNTH (232 aa). Residues Asn-160, Asn-213, and Asn-260 are each glycosylated (N-linked (GlcNAc...) asparagine). 2 disulfides stabilise this stretch: Cys-290–Cys-316 and Cys-292–Cys-309.

This sequence belongs to the sarcoglycan beta/delta/gamma/zeta family. In terms of assembly, cross-link to form 2 major subcomplexes: one consisting of SGCB, SGCD and SGCG and the other consisting of SGCB and SGCD. The association between SGCB and SGCG is particularly strong while SGCA is loosely associated with the other sarcoglycans. In terms of processing, disulfide bonds are present. As to expression, most strongly expressed in skeletal and heart muscle. Also detected in proliferating myoblasts.

It is found in the cell membrane. It localises to the sarcolemma. The protein localises to the cytoplasm. Its subcellular location is the cytoskeleton. Functionally, component of the sarcoglycan complex, a subcomplex of the dystrophin-glycoprotein complex which forms a link between the F-actin cytoskeleton and the extracellular matrix. The sequence is that of Beta-sarcoglycan (Sgcb) from Mus musculus (Mouse).